A 158-amino-acid polypeptide reads, in one-letter code: Transcriptional regulator MraZ (158 aa).

2 SpoVT-AbrB domains span residues 5–50 and 91–134; these read IYET…GGVY and AVEC…SQSE.

It belongs to the MraZ family. In terms of assembly, forms oligomers.

The protein resides in the cytoplasm. It is found in the nucleoid. The protein is Transcriptional regulator MraZ of Geobacter metallireducens (strain ATCC 53774 / DSM 7210 / GS-15).